A 605-amino-acid chain; its full sequence is Golgi-associated RAB2 interactor protein 3 (605 aa).

2 disordered regions span residues 234-265 and 407-529; these read GEGIQHASHGTASAASPSTSTPGAAEGGAART and YMSE…ALQK. Positions 239-265 are enriched in low complexity; sequence HASHGTASAASPSTSTPGAAEGGAART. A compositionally biased stretch (basic residues) spans 434 to 457; it reads KKDRHPSRKSSHHRKAGESHRRRA. A Bipartite nuclear localization signal motif is present at residues 441–458; it reads RKSSHHRKAGESHRRRAG. Residues 463-473 are compositionally biased toward polar residues; the sequence is KASSHRSASGH. Residues 475-484 are compositionally biased toward basic and acidic residues; sequence NTRDDKKEKG. Over residues 489–500 the composition is skewed to basic residues; sequence RGKRHGSSRKSS. Positions 513–526 are enriched in polar residues; that stretch reads QELGKNQSASSTGA. Position 592 is a phosphoserine (S592).

It belongs to the GARIN family. As to quaternary structure, interacts (via N-terminus) with RAB2B (in GTP-bound form). Interacts with FRG1. Expressed in adult spermatocytes and spermatids (at protein level).

It is found in the golgi apparatus. The protein localises to the nucleus. Its subcellular location is the cajal body. In terms of biological role, may be involved in RNA biogenesis. This chain is Golgi-associated RAB2 interactor protein 3, found in Homo sapiens (Human).